The sequence spans 94 residues: Translation initiation factor IF-1 (94 aa).

One can recognise an S1-like domain in the interval Met1–Lys72. Positions His71–Arg94 are disordered. Low complexity predominate over residues Pro82–Arg94.

This sequence belongs to the IF-1 family. In terms of assembly, component of the 30S ribosomal translation pre-initiation complex which assembles on the 30S ribosome in the order IF-2 and IF-3, IF-1 and N-formylmethionyl-tRNA(fMet); mRNA recruitment can occur at any time during PIC assembly.

It is found in the cytoplasm. Its function is as follows. One of the essential components for the initiation of protein synthesis. Stabilizes the binding of IF-2 and IF-3 on the 30S subunit to which N-formylmethionyl-tRNA(fMet) subsequently binds. Helps modulate mRNA selection, yielding the 30S pre-initiation complex (PIC). Upon addition of the 50S ribosomal subunit IF-1, IF-2 and IF-3 are released leaving the mature 70S translation initiation complex. The polypeptide is Translation initiation factor IF-1 (Rhodopseudomonas palustris (strain BisB5)).